A 349-amino-acid polypeptide reads, in one-letter code: Autophagy-related protein 3 (349 aa).

The tract at residues 95 to 173 (ALVNDGDDFK…IRDSGADSKN (79 aa)) is flexible region. The Glycyl thioester intermediate role is filled by cysteine 244. The segment at 248-325 (SVMKTLLDRA…DQEVAIRVDQ (78 aa)) is handle region. An ATG8 interaction motif (AIM) motif is present at residues 306 to 309 (WEEV).

This sequence belongs to the ATG3 family. In terms of assembly, monomer. Interacts with ATG8 through an intermediate thioester bond between Cys-244 and the C-terminal Gly of ATG8. Interacts with the C-terminal region of the E1-like ATG7 enzyme. Also interacts with the ATG12-ATG5 conjugate.

The protein resides in the cytoplasm. Functionally, E2 conjugating enzyme required for the cytoplasm to vacuole transport (Cvt) and autophagy. Required for selective autophagic degradation of the nucleus (nucleophagy) as well as for mitophagy which contributes to regulate mitochondrial quantity and quality by eliminating the mitochondria to a basal level to fulfill cellular energy requirements and preventing excess ROS production. Responsible for the E2-like covalent binding of phosphatidylethanolamine to the C-terminal Gly of ATG8. The ATG12-ATG5 conjugate plays a role of an E3 and promotes the transfer of ATG8 from ATG3 to phosphatidylethanolamine (PE). This step is required for the membrane association of ATG8. The formation of the ATG8-phosphatidylethanolamine conjugate is essential for autophagy and for the cytoplasm to vacuole transport (Cvt). The ATG8-PE conjugate mediates tethering between adjacent membranes and stimulates membrane hemifusion, leading to expansion of the autophagosomal membrane during autophagy. Autophagy is required for proper vegetative growth, asexual/sexual reproduction, and full virulence. Autophagy is particularly involved in the biosynthesis of deoxynivalenol (DON), an important virulence determinant. This chain is Autophagy-related protein 3, found in Gibberella zeae (strain ATCC MYA-4620 / CBS 123657 / FGSC 9075 / NRRL 31084 / PH-1) (Wheat head blight fungus).